We begin with the raw amino-acid sequence, 401 residues long: Tumor necrosis factor receptor superfamily member 11B (401 aa).

A signal peptide spans 1–21 (MNNLLCCALVFLDISIKWTTQ). TNFR-Cys repeat units follow at residues 24-62 (FPPK…KTVC), 65-105 (CPDH…NRVC), 107-142 (CKEG…NTVC), and 145-185 (CPDG…DNIC). Intrachain disulfides connect cysteine 41/cysteine 54, cysteine 44/cysteine 62, cysteine 65/cysteine 80, cysteine 83/cysteine 97, cysteine 87/cysteine 105, cysteine 107/cysteine 118, cysteine 124/cysteine 142, and cysteine 145/cysteine 160. Residue asparagine 98 is glycosylated (N-linked (GlcNAc...) asparagine). 3 N-linked (GlcNAc...) asparagine glycosylation sites follow: asparagine 152, asparagine 165, and asparagine 178. Cysteine 166 and cysteine 185 are joined by a disulfide. 2 consecutive Death domains span residues 198–269 (DVTL…IVKK) and 270–365 (IIQD…TQSL). Asparagine 289 carries an N-linked (GlcNAc...) asparagine glycan.

In terms of assembly, homodimer. Interacts with TNFSF10 and TNFSF11. In terms of processing, N-glycosylated. Contains sialic acid residues. The N-terminus is blocked. As to expression, highly expressed in adult lung, heart, kidney, liver, spleen, thymus, prostate, ovary, small intestine, thyroid, lymph node, trachea, adrenal gland, testis, and bone marrow. Detected at very low levels in brain, placenta and skeletal muscle. Highly expressed in fetal kidney, liver and lung.

Its subcellular location is the secreted. In terms of biological role, acts as a decoy receptor for TNFSF11/RANKL and thereby neutralizes its function in osteoclastogenesis. Inhibits the activation of osteoclasts and promotes osteoclast apoptosis in vitro. Bone homeostasis seems to depend on the local ratio between TNFSF11 and TNFRSF11B. May also play a role in preventing arterial calcification. May act as decoy receptor for TNFSF10/TRAIL and protect against apoptosis. TNFSF10/TRAIL binding blocks the inhibition of osteoclastogenesis. This chain is Tumor necrosis factor receptor superfamily member 11B (TNFRSF11B), found in Homo sapiens (Human).